The chain runs to 1059 residues: WD repeat-containing protein on Y chromosome (1059 aa).

WD repeat units follow at residues 121–161 (DFCP…ALTA), 170–209 (RSKT…FTLK), 214–256 (RLPQ…KVTT), 344–383 (CVPR…KPSV), 387–426 (GHTS…LLQT), 476–515 (SHTK…KMTI), 528–567 (LEPV…CMRT), 616–658 (QHSD…RRYD), 714–759 (MRQL…GFKG), 766–805 (MAGD…IPNE), and 849–888 (AHRA…IGLL).

The chain is WD repeat-containing protein on Y chromosome from Anopheles gambiae (African malaria mosquito).